We begin with the raw amino-acid sequence, 65 residues long: Large ribosomal subunit protein bL35 (65 aa).

This sequence belongs to the bacterial ribosomal protein bL35 family.

The chain is Large ribosomal subunit protein bL35 from Thermotoga neapolitana (strain ATCC 49049 / DSM 4359 / NBRC 107923 / NS-E).